A 228-amino-acid polypeptide reads, in one-letter code: Superoxide dismutase [Mn], mitochondrial (228 aa).

A mitochondrion-targeting transit peptide spans 1–24 (MALRNLMTKKPFAGILTFRQQLRC). Mn(2+) contacts are provided by H52, H100, D189, and H193.

It belongs to the iron/manganese superoxide dismutase family. Homotetramer. Requires Mn(2+) as cofactor.

It localises to the mitochondrion matrix. The enzyme catalyses 2 superoxide + 2 H(+) = H2O2 + O2. Functionally, destroys superoxide anion radicals which are normally produced within the cells and which are toxic to biological systems. This chain is Superoxide dismutase [Mn], mitochondrial (SODA), found in Capsicum annuum (Capsicum pepper).